The primary structure comprises 511 residues: uncharacterized protein (511 aa).

A run of 3 helical transmembrane segments spans residues 33–53, 59–79, and 97–117; these read IICM…LAMA, IPVQ…AHIS, and VGRF…TTSI. Ser147, Ser161, and Ser162 each carry phosphoserine. A disordered region spans residues 157 to 180; sequence REGNSSDEYLPPQSSRRDVSSEKP. Helical transmembrane passes span 216 to 236, 249 to 269, 297 to 317, 332 to 352, 412 to 432, 449 to 469, and 483 to 503; these read LWLY…AGIF, IKGA…LGAF, MVES…EHLG, SLAF…SKVV, VLWG…YIML, IITS…SYDV, and IMNI…MFLI.

To yeast YCR061W.

Its subcellular location is the endoplasmic reticulum membrane. This is an uncharacterized protein from Schizosaccharomyces pombe (strain 972 / ATCC 24843) (Fission yeast).